A 295-amino-acid polypeptide reads, in one-letter code: Maintenance of mitochondrial morphology protein 1 (295 aa).

At 1–12 the chain is on the lumenal side; the sequence is MVQLFHLTFTQG. Residues 13–33 form a helical membrane-spanning segment; that stretch reads FFIGQLSVIVIVYIFLRFFLF. Over 34 to 295 the chain is Cytoplasmic; it reads CTKEELKNVQ…REGHRQKSTE (262 aa). The 198-residue stretch at 81–278 folds into the SMP-LTD domain; that stretch reads EEESLDWFNV…SPQFQQISIP (198 aa).

Belongs to the MMM1 family. As to quaternary structure, homodimer. Component of the ER-mitochondria encounter structure (ERMES) or MDM complex, composed of mmm1, mdm10, mdm12 and mdm34. A mmm1 homodimer associates with one molecule of mdm12 on each side in a pairwise head-to-tail manner, and the SMP-LTD domains of mmm1 and mdm12 generate a continuous hydrophobic tunnel for phospholipid trafficking.

It localises to the endoplasmic reticulum membrane. Its function is as follows. Component of the ERMES/MDM complex, which serves as a molecular tether to connect the endoplasmic reticulum (ER) and mitochondria. Components of this complex are involved in the control of mitochondrial shape and protein biogenesis, and function in nonvesicular lipid trafficking between the ER and mitochondria. The mdm12-mmm1 subcomplex functions in the major beta-barrel assembly pathway that is responsible for biogenesis of all outer membrane beta-barrel proteins, and acts in a late step after the SAM complex. The mdm10-mdm12-mmm1 subcomplex further acts in the TOM40-specific pathway after the action of the mdm12-mmm1 complex. Essential for establishing and maintaining the structure of mitochondria and maintenance of mtDNA nucleoids. The chain is Maintenance of mitochondrial morphology protein 1 from Schizosaccharomyces japonicus (strain yFS275 / FY16936) (Fission yeast).